The chain runs to 473 residues: Envelope glycoprotein M (473 aa).

At 1-32 (MGRPAPRGSPDSAPPTKGMTGARTAWWVWCVQ) the chain is on the intravirion side. A helical membrane pass occupies residues 33–53 (VATFVVSAVCVTGLLVLASVF). Residues 54–90 (RARFPCFYATASSYAGVNSTAEVRGGVAVPLRLDTQS) are Virion surface-facing. Residues 91–111 (LVGTYVITAVLLLAVAVYAVV) traverse the membrane as a helical segment. Topologically, residues 112 to 137 (GAVTSRYDRALDAGRRLAAARMAMPH) are intravirion. A helical membrane pass occupies residues 138–158 (ATLIAGNVCSWLLQITVLLLA). The Virion surface segment spans residues 159-163 (HRISQ). A helical transmembrane segment spans residues 164–184 (LAHLVYVLHFACLVYFAAHFC). Residues 185-216 (TRGVLSGTYLRQVHGLMELAPTHHRVVGPARA) are Intravirion-facing. Residues 217–237 (VLTNALLLGVFLCTADAAVSL) form a helical membrane-spanning segment. The Virion surface segment spans residues 238 to 250 (NTIAAFNFNFSAP). A helical transmembrane segment spans residues 251–271 (GMLICLTVLFAILVVSLLLVV). At 272–280 (EGVLCHYVR) the chain is on the intravirion side. A helical transmembrane segment spans residues 281–301 (VLVGPHLGAVAATGIVGLACE). Topologically, residues 302–318 (HYYTNGYYVVETQWPGA) are virion surface. Residues 319 to 339 (QTGVRVALALVAAFALGMAVL) form a helical membrane-spanning segment. Topologically, residues 340–473 (RCTRAYLYHR…DPVYSTVRRW (134 aa)) are intravirion. Disordered regions lie at residues 371-399 (KRVR…PEYA) and 440-473 (HPRH…VRRW).

Belongs to the herpesviridae glycoprotein M family. Interacts (via N-terminus) with gN (via N-terminus). The gM-gN heterodimer forms the gCII complex.

The protein localises to the virion membrane. Its subcellular location is the host Golgi apparatus. The protein resides in the host trans-Golgi network. It is found in the host endosome membrane. It localises to the host nucleus inner membrane. In terms of biological role, envelope glycoprotein important for virion assembly and egress. Plays a role in the correct incorporation of gH-gL into virion membrane. Directs the glycoprotein N (gN) to the host trans-Golgi network. The chain is Envelope glycoprotein M from Human herpesvirus 1 (strain 17) (HHV-1).